Here is a 587-residue protein sequence, read N- to C-terminus: Putative adhesin (587 aa).

A signal peptide spans 1–19 (MKFAISTLLIILQAAAVFA). An intrachain disulfide couples cysteine 211 to cysteine 261. Asparagine 239 carries N-linked (GlcNAc...) asparagine glycosylation. A run of 4 repeats spans residues 432–455 (IVTVITKEGGDKYTKTYEEVTYTK), 466–489 (IVTVKTKEGGEKVTKTYEEVTYTK), 491–512 (PEIVTVVTKEGGEKVTTTYHDV), and 513–531 (PEVVTVITKEGGEKVTTTY). Residues 432 to 531 (IVTVITKEGG…EGGEKVTTTY (100 aa)) form a 4 X 24 AA approximate tandem repeats, Thr-rich region. Serine 562 carries GPI-anchor amidated serine lipidation. Positions 563–587 (EAQVNLGSKSAVGLLAIVPMLFLAI) are cleaved as a propeptide — removed in mature form.

In terms of processing, the GPI-anchor is attached to the protein in the endoplasmic reticulum and serves to target the protein to the cell surface. There, the glucosamine-inositol phospholipid moiety is cleaved off and the GPI-modified mannoprotein is covalently attached via its lipidless GPI glycan remnant to the 1,6-beta-glucan of the outer cell wall layer.

It localises to the cell membrane. The protein resides in the secreted. The protein localises to the cell wall. Putative adhesion protein. May be involved in cell-cell interaction, interacting with other proteins by salt bridges and hydrogen bonds. The sequence is that of Putative adhesin from Komagataella phaffii (strain ATCC 76273 / CBS 7435 / CECT 11047 / NRRL Y-11430 / Wegner 21-1) (Yeast).